The primary structure comprises 404 residues: Propionate kinase (404 aa).

Belongs to the acetokinase family. PduW subfamily.

It is found in the cytoplasm. It carries out the reaction propanoate + ATP = propanoyl phosphate + ADP. Its pathway is polyol metabolism; 1,2-propanediol degradation. Functionally, works with phosphate acetyltransferase (pta) to capture exogenous propionate and regenerate propionyl-CoA during degradation of 1,2-propanediol (1,2-PD). In Klebsiella pneumoniae subsp. pneumoniae (strain ATCC 700721 / MGH 78578), this protein is Propionate kinase.